Here is a 366-residue protein sequence, read N- to C-terminus: tRNA/tmRNA (uracil-C(5))-methyltransferase (366 aa).

Positions 190, 218, 223, 239, and 299 each coordinate S-adenosyl-L-methionine. The active-site Nucleophile is Cys-324. Glu-358 serves as the catalytic Proton acceptor.

It belongs to the class I-like SAM-binding methyltransferase superfamily. RNA M5U methyltransferase family. TrmA subfamily.

The catalysed reaction is uridine(54) in tRNA + S-adenosyl-L-methionine = 5-methyluridine(54) in tRNA + S-adenosyl-L-homocysteine + H(+). It catalyses the reaction uridine(341) in tmRNA + S-adenosyl-L-methionine = 5-methyluridine(341) in tmRNA + S-adenosyl-L-homocysteine + H(+). Its function is as follows. Dual-specificity methyltransferase that catalyzes the formation of 5-methyluridine at position 54 (m5U54) in all tRNAs, and that of position 341 (m5U341) in tmRNA (transfer-mRNA). This chain is tRNA/tmRNA (uracil-C(5))-methyltransferase, found in Salmonella newport (strain SL254).